Reading from the N-terminus, the 328-residue chain is Cytochrome c biogenesis protein CcsA (328 aa).

The next 8 membrane-spanning stretches (helical) occupy residues Ile-13–Leu-33, Gly-46–Gly-66, Leu-73–Phe-93, Leu-101–Leu-121, Met-146–Ile-166, Ile-234–Asn-254, Trp-263–Ile-283, and Ala-295–Leu-315.

The protein belongs to the CcmF/CycK/Ccl1/NrfE/CcsA family. May interact with Ccs1.

Its subcellular location is the plastid. The protein localises to the chloroplast thylakoid membrane. Functionally, required during biogenesis of c-type cytochromes (cytochrome c6 and cytochrome f) at the step of heme attachment. The sequence is that of Cytochrome c biogenesis protein CcsA from Capsella bursa-pastoris (Shepherd's purse).